A 206-amino-acid polypeptide reads, in one-letter code: Isochorismatase family protein 1A (206 aa).

This sequence belongs to the isochorismatase family.

In Dictyostelium discoideum (Social amoeba), this protein is Isochorismatase family protein 1A.